A 517-amino-acid chain; its full sequence is Protein IQ-DOMAIN 13 (517 aa).

The interval methionine 1–isoleucine 11 is calmodulin-binding. 2 disordered regions span residues methionine 1–isoleucine 60 and valine 81–valine 147. A compositionally biased stretch (basic residues) spans lysine 40–leucine 49. Residues aspartate 89 to alanine 99 show a composition bias toward polar residues. Residues proline 134–proline 144 are compositionally biased toward pro residues. IQ domains lie at lysine 168–arginine 196 and leucine 197–glutamine 218. Disordered regions lie at residues glutamine 324 to cysteine 407 and lysine 425 to proline 452. The span at leucine 328–serine 342 shows a compositional bias: low complexity. A compositionally biased stretch (polar residues) spans asparagine 343–threonine 367. The span at proline 432–arginine 448 shows a compositional bias: basic and acidic residues.

This sequence belongs to the IQD family. As to quaternary structure, binds to multiple calmodulin (CaM) in the presence of Ca(2+) and CaM-like proteins. As to expression, expressed in vessels of roots, cotyledons and leaves, as well as in trichomes.

The protein resides in the cell membrane. Its subcellular location is the cytoplasm. It localises to the cytoskeleton. May be involved in cooperative interactions with calmodulins or calmodulin-like proteins. Recruits calmodulin proteins to microtubules, thus being a potential scaffold in cellular signaling and trafficking. Regulates the formation of oval xylem secondary cell-wall deposition pits through microtubule-dependent lateral inhibition of Rho GTPase domains, thus confining the area of active ROP domains within the lattice of the cortical microtubules. May associate with nucleic acids and regulate gene expression at the transcriptional or post-transcriptional level. The protein is Protein IQ-DOMAIN 13 of Arabidopsis thaliana (Mouse-ear cress).